The primary structure comprises 336 residues: Ketol-acid reductoisomerase (NADP(+)) 1 (336 aa).

The region spanning 2–181 (AKVYYEKDVT…GATRAGVLET (180 aa)) is the KARI N-terminal Rossmann domain. Residues 25–28 (YGSQ), R48, S52, and 82–85 (DELQ) contribute to the NADP(+) site. Residue H107 is part of the active site. G133 lines the NADP(+) pocket. In terms of domain architecture, KARI C-terminal knotted spans 182-327 (TFKEETETDL…RKLREMMPFV (146 aa)). Positions 190, 194, 226, and 230 each coordinate Mg(2+). Residue S251 coordinates substrate.

It belongs to the ketol-acid reductoisomerase family. Requires Mg(2+) as cofactor.

The enzyme catalyses (2R)-2,3-dihydroxy-3-methylbutanoate + NADP(+) = (2S)-2-acetolactate + NADPH + H(+). It carries out the reaction (2R,3R)-2,3-dihydroxy-3-methylpentanoate + NADP(+) = (S)-2-ethyl-2-hydroxy-3-oxobutanoate + NADPH + H(+). It functions in the pathway amino-acid biosynthesis; L-isoleucine biosynthesis; L-isoleucine from 2-oxobutanoate: step 2/4. Its pathway is amino-acid biosynthesis; L-valine biosynthesis; L-valine from pyruvate: step 2/4. Functionally, involved in the biosynthesis of branched-chain amino acids (BCAA). Catalyzes an alkyl-migration followed by a ketol-acid reduction of (S)-2-acetolactate (S2AL) to yield (R)-2,3-dihydroxy-isovalerate. In the isomerase reaction, S2AL is rearranged via a Mg-dependent methyl migration to produce 3-hydroxy-3-methyl-2-ketobutyrate (HMKB). In the reductase reaction, this 2-ketoacid undergoes a metal-dependent reduction by NADPH to yield (R)-2,3-dihydroxy-isovalerate. This Bacillus cereus (strain ATCC 14579 / DSM 31 / CCUG 7414 / JCM 2152 / NBRC 15305 / NCIMB 9373 / NCTC 2599 / NRRL B-3711) protein is Ketol-acid reductoisomerase (NADP(+)) 1.